We begin with the raw amino-acid sequence, 321 residues long: Cytochrome c biogenesis protein CcsA (321 aa).

Helical transmembrane passes span 9–29 (ILTHISFSIISIVITIHLMTL), 44–64 (GIISTFFSITGLLITRWIYSG), 71–91 (LYESLIFLSWSFSIIHMIPYL), 98–118 (LSVITVPSVIFTQGFVTSCLS), 143–163 (MLLSYATLLCGSLLSVALLVI), 225–245 (IISLGFIFLTMGILSGAVWAN), 260–280 (WAFITWTIFAIYSHIRININF), and 288–308 (VASIGFLIIWICYFGINLLGI).

The protein belongs to the CcmF/CycK/Ccl1/NrfE/CcsA family. May interact with Ccs1.

The protein localises to the plastid. The protein resides in the chloroplast thylakoid membrane. Required during biogenesis of c-type cytochromes (cytochrome c6 and cytochrome f) at the step of heme attachment. The chain is Cytochrome c biogenesis protein CcsA from Dioscorea elephantipes (Elephant's foot yam).